Here is a 257-residue protein sequence, read N- to C-terminus: MVLIRVLANLLILQLSYAQKSSELVIGGDECNINEHPFLVLVYYDDYQCGGTLLNEEWVLTAAHCNGKDMEIYLGVHSKKVPNKDVQRRVPKEKFFCDSSKTYTKWNKDIMLIRLDRPVRKSAHIAPLSLPSSPPSVGSVCRVMGWGTITSPQETYPDVPHCANINLLDYEVCRAAYAGLPATSRTLCAGILEGGKDSCVGDSGGPLICNGQFQGIVSWGGDPCAQPREPGVYTNVFDHLDWIKGIIAGNTDVTCPL.

An N-terminal signal peptide occupies residues Met1–Ala18. Residues Gln19–Leu24 constitute a propeptide that is removed on maturation. One can recognise a Peptidase S1 domain in the interval Val25 to Ala248. Cystine bridges form between Cys31/Cys162, Cys49/Cys65, Cys97/Cys255, Cys141/Cys209, Cys173/Cys188, and Cys199/Cys224. Active-site charge relay system residues include His64 and Asp109. Ser203 acts as the Charge relay system in catalysis.

The protein belongs to the peptidase S1 family. Snake venom subfamily. In terms of assembly, monomer. As to expression, expressed by the venom gland.

It localises to the secreted. Functionally, snake venom serine protease with fibrinogenolytic activities. Cleaves beta-chain of fibrinogen (FGB) efficiently and shows relatively lower activity on alpha-chain. This is Beta-fibrinogenase mucrofibrase-3 from Protobothrops mucrosquamatus (Taiwan habu).